The following is a 557-amino-acid chain: Dihydroxy-acid dehydratase (557 aa).

Cys-50 lines the [2Fe-2S] cluster pocket. Asp-82 lines the Mg(2+) pocket. Cys-123 is a binding site for [2Fe-2S] cluster. Residues Asp-124 and Lys-125 each coordinate Mg(2+). At Lys-125 the chain carries N6-carboxylysine. Cys-195 is a binding site for [2Fe-2S] cluster. Mg(2+) is bound at residue Glu-447. The active-site Proton acceptor is the Ser-473.

It belongs to the IlvD/Edd family. In terms of assembly, homodimer. Requires [2Fe-2S] cluster as cofactor. Mg(2+) serves as cofactor.

The enzyme catalyses (2R)-2,3-dihydroxy-3-methylbutanoate = 3-methyl-2-oxobutanoate + H2O. It catalyses the reaction (2R,3R)-2,3-dihydroxy-3-methylpentanoate = (S)-3-methyl-2-oxopentanoate + H2O. The protein operates within amino-acid biosynthesis; L-isoleucine biosynthesis; L-isoleucine from 2-oxobutanoate: step 3/4. It participates in amino-acid biosynthesis; L-valine biosynthesis; L-valine from pyruvate: step 3/4. In terms of biological role, functions in the biosynthesis of branched-chain amino acids. Catalyzes the dehydration of (2R,3R)-2,3-dihydroxy-3-methylpentanoate (2,3-dihydroxy-3-methylvalerate) into 2-oxo-3-methylpentanoate (2-oxo-3-methylvalerate) and of (2R)-2,3-dihydroxy-3-methylbutanoate (2,3-dihydroxyisovalerate) into 2-oxo-3-methylbutanoate (2-oxoisovalerate), the penultimate precursor to L-isoleucine and L-valine, respectively. This is Dihydroxy-acid dehydratase from Burkholderia thailandensis (strain ATCC 700388 / DSM 13276 / CCUG 48851 / CIP 106301 / E264).